Reading from the N-terminus, the 71-residue chain is Heat-stable enterotoxin B (71 aa).

Residues 1 to 19 form the signal peptide; the sequence is MKKIILALVLMLFSFCTLG. Positions 20–52 are excised as a propeptide; the sequence is QETASMHLDDTLSAPIAAEINRKACDTQTPSPS. Intrachain disulfides connect Cys59–Cys64, Cys60–Cys68, and Cys63–Cys71.

Belongs to the heat-stable enterotoxin family.

The protein resides in the secreted. Its function is as follows. Toxin which activates the particulate form of guanylate cyclase and increases cyclic GMP levels within the host intestinal epithelial cells. Could play an important role in pathogenesis. This Yersinia enterocolitica protein is Heat-stable enterotoxin B (ystB).